Reading from the N-terminus, the 892-residue chain is Leucine--tRNA ligase (892 aa).

A 'HIGH' region motif is present at residues proline 42 to histidine 52. The short motif at threonine 640–serine 644 is the 'KMSKS' region element. Lysine 643 lines the ATP pocket.

Belongs to the class-I aminoacyl-tRNA synthetase family.

The protein resides in the cytoplasm. It catalyses the reaction tRNA(Leu) + L-leucine + ATP = L-leucyl-tRNA(Leu) + AMP + diphosphate. The chain is Leucine--tRNA ligase from Albidiferax ferrireducens (strain ATCC BAA-621 / DSM 15236 / T118) (Rhodoferax ferrireducens).